Consider the following 989-residue polypeptide: AP-2 complex subunit alpha-2 (989 aa).

HEAT repeat units follow at residues Glu-112–Ala-149, Val-188–Ile-225, Ile-368–Lys-402, and Asn-403–Ser-440. Residues Asp-610–Ser-745 form a disordered region. Residues Asn-611–Asn-623 are compositionally biased toward low complexity. A compositionally biased stretch (polar residues) spans Met-624–Asn-638. Residues Gln-639–Ala-703 show a composition bias toward low complexity. Positions Glu-704–Val-714 are enriched in polar residues. Residues Ser-715–Ser-745 are compositionally biased toward low complexity.

It belongs to the adaptor complexes large subunit family. In terms of assembly, adaptor protein complex 2 (AP-2) is a heterotetramer composed of two large adaptins (alpha-type and beta-type subunits), a medium adaptin (mu-type subunit AP50) and a small adaptin (sigma-type subunit AP17).

The protein localises to the cell membrane. The protein resides in the membrane. It is found in the coated pit. Its function is as follows. Component of the adaptor complexes which link clathrin to receptors in coated vesicles. Clathrin-associated protein complexes are believed to interact with the cytoplasmic tails of membrane proteins, leading to their selection and concentration. This is AP-2 complex subunit alpha-2 (ap2a1-1) from Dictyostelium discoideum (Social amoeba).